A 444-amino-acid chain; its full sequence is MRKVKPKLNLTSQTARIVNLSHDGRGIARVNGKATFIQGALPGEVVEFQYTRVKKDFDEGKLLSIVEPSTLRVEPKCPHYQMCGGCSLQHMSAEEQIRFKQSHLLDLLSRYGHTEPQSVLSPLTSHHWNYRNKARLSTRFVEKKQSTMVGFRERNNPRFITEINQCPILNSKIDTDIVHLRKLIDTMEDKHCIAQIEVAAGDNEVALIFRNLSPLTEQDELKIREFAQQFQYKVFLQPGGLDSVFCFYPSDAHAYLSYELPDYQITFQFHPNDFTQVNAELNRKMVTQAIQLMELKNSDIVLDLFCGLGNFSLPMAKHCSRVIGVEGNKNMVERAYMNAKSNHITNVDFYAANLDDVMEVRSLVNTSFSKVLIDPPRSGALEIVKQIDSIDPERIVYVSCNPITLARDTDILVNQKGYVLITAGVMDMFPHTAHVESIALFQKG.

A TRAM domain is found at 5–64 (KPKLNLTSQTARIVNLSHDGRGIARVNGKATFIQGALPGEVVEFQYTRVKKDFDEGKLLS). [4Fe-4S] cluster contacts are provided by Cys77, Cys83, Cys86, and Cys166. S-adenosyl-L-methionine is bound by residues Gln276, Phe305, Asn310, Glu326, Asn353, and Asp374. Cys400 functions as the Nucleophile in the catalytic mechanism.

This sequence belongs to the class I-like SAM-binding methyltransferase superfamily. RNA M5U methyltransferase family. RlmD subfamily.

The enzyme catalyses uridine(1939) in 23S rRNA + S-adenosyl-L-methionine = 5-methyluridine(1939) in 23S rRNA + S-adenosyl-L-homocysteine + H(+). Functionally, catalyzes the formation of 5-methyl-uridine at position 1939 (m5U1939) in 23S rRNA. The protein is 23S rRNA (uracil(1939)-C(5))-methyltransferase RlmD of Legionella pneumophila (strain Paris).